The following is a 604-amino-acid chain: Lipoma-preferred partner homolog (604 aa).

Disordered stretches follow at residues 31–96 (TPSI…LDDV) and 129–381 (DLES…AFRP). Residues 32-41 (PSISVSTQQT) are compositionally biased toward polar residues. Low complexity-rich tracts occupy residues 42–53 (PKKFAPVVAPKP) and 143–161 (GSGT…TPVT). A compositionally biased stretch (polar residues) spans 207-226 (SYTTASTPSRPTFNVQVRTA). Positions 365 to 377 (SGYPSSGPTSSTP) are enriched in low complexity. LIM zinc-binding domains are found at residues 406-465 (GRCA…INTL), 466-526 (EQCS…KFAP), and 527-595 (RCSV…RIQA).

The protein belongs to the zyxin/ajuba family.

The protein localises to the nucleus. It localises to the cytoplasm. The protein resides in the cell junction. May play a structural role at sites of cell adhesion in maintaining cell shape and motility. May be involved in signal transduction from cell adhesion sites to the nucleus. In Gallus gallus (Chicken), this protein is Lipoma-preferred partner homolog (LPP).